Here is a 122-residue protein sequence, read N- to C-terminus: Prefoldin subunit 1 (122 aa).

Ala2 is modified (N-acetylalanine).

Belongs to the prefoldin subunit beta family. In terms of assembly, heterohexamer of two PFD-alpha type and four PFD-beta type subunits.

Its function is as follows. Binds specifically to cytosolic chaperonin (c-CPN) and transfers target proteins to it. Binds to nascent polypeptide chain and promotes folding in an environment in which there are many competing pathways for nonnative proteins. In Mus musculus (Mouse), this protein is Prefoldin subunit 1 (Pfdn1).